A 258-amino-acid chain; its full sequence is Phosphate import ATP-binding protein PstB (258 aa).

Residues 12-253 form the ABC transporter domain; sequence LEVKNLNFYY…PARKETEDYI (242 aa). ATP is bound at residue 44-51; the sequence is GPSGCGKS.

The protein belongs to the ABC transporter superfamily. Phosphate importer (TC 3.A.1.7) family. The complex is composed of two ATP-binding proteins (PstB), two transmembrane proteins (PstC and PstA) and a solute-binding protein (PstS).

It localises to the cell inner membrane. It carries out the reaction phosphate(out) + ATP + H2O = ADP + 2 phosphate(in) + H(+). Functionally, part of the ABC transporter complex PstSACB involved in phosphate import. Responsible for energy coupling to the transport system. This chain is Phosphate import ATP-binding protein PstB, found in Bordetella parapertussis (strain 12822 / ATCC BAA-587 / NCTC 13253).